Here is a 184-residue protein sequence, read N- to C-terminus: ATP synthase subunit b, chloroplastic (184 aa).

A helical membrane pass occupies residues 27-49 (LATNPINLSVVLGVLIFFGKGVL).

The protein belongs to the ATPase B chain family. In terms of assembly, F-type ATPases have 2 components, F(1) - the catalytic core - and F(0) - the membrane proton channel. F(1) has five subunits: alpha(3), beta(3), gamma(1), delta(1), epsilon(1). F(0) has four main subunits: a(1), b(1), b'(1) and c(10-14). The alpha and beta chains form an alternating ring which encloses part of the gamma chain. F(1) is attached to F(0) by a central stalk formed by the gamma and epsilon chains, while a peripheral stalk is formed by the delta, b and b' chains.

It localises to the plastid. It is found in the chloroplast thylakoid membrane. Functionally, f(1)F(0) ATP synthase produces ATP from ADP in the presence of a proton or sodium gradient. F-type ATPases consist of two structural domains, F(1) containing the extramembraneous catalytic core and F(0) containing the membrane proton channel, linked together by a central stalk and a peripheral stalk. During catalysis, ATP synthesis in the catalytic domain of F(1) is coupled via a rotary mechanism of the central stalk subunits to proton translocation. Its function is as follows. Component of the F(0) channel, it forms part of the peripheral stalk, linking F(1) to F(0). This is ATP synthase subunit b, chloroplastic from Lepidium virginicum (Virginia pepperweed).